A 361-amino-acid chain; its full sequence is Replication-associated protein (361 aa).

Residues 1-31 are disordered; it reads MSSLPVSESEGEGSGTSVQVPSRGGQVTPGE. Residues 35-138 enclose the CRESS-DNA virus Rep endonuclease domain; it reads SLRTKHVFLT…PESSWEFGKF (104 aa). The RCR-1 motif lies at 42–45; it reads FLTY. Residues Glu-76, His-84, and His-86 each contribute to the a divalent metal cation site. The RCR-2 motif lies at 84–86; sequence HLH. The active-site For DNA cleavage activity is Tyr-124. Positions 124–127 match the RCR-3 motif; it reads YCMK. The segment at 192–204 is oligomerization; the sequence is SANALFPDPPQTY. 243–250 provides a ligand contact to ATP; that stretch reads GPTRTGKT. Positions 266–285 are transactivation; sequence VNFLEEWNCQAQFNIIDDIP. Residues 307–317 carry the Nuclear localization signal motif; that stretch reads KYGKKKRIPNG.

This sequence belongs to the geminiviridae Rep protein family. As to quaternary structure, homooligomer. Rep binds to repeated DNA motifs (iterons). Forms the O-complex, which is a Rep-DNA complex involved in the initiation of RCR. Part of the C- and V-complexes which are RepA-Rep-DNA complexes involved in the c-sense and v-sense transcription. Requires Mg(2+) as cofactor. The cofactor is Mn(2+).

It localises to the host nucleus. In terms of biological role, essential for the replication of viral ssDNA. The closed circular ssDNA genome is first converted to a superhelical dsDNA. Rep binds a specific region at the genome origin of replication. It introduces an endonucleolytic nick within the conserved sequence 5'-TAATATTAC-3' in the intergenic region of the genome present in all geminiviruses, thereby initiating the rolling circle replication (RCR). Following cleavage, binds covalently to the 5'-phosphate of DNA as a tyrosyl ester. The cleavage gives rise to a free 3'-OH that serves as a primer for the cellular DNA polymerase. The polymerase synthesizes the (+) strand DNA by rolling circle mechanism. After one round of replication, a Rep-catalyzed nucleotidyl transfer reaction releases a circular single-stranded virus genome, thereby terminating the replication. Displays origin-specific DNA cleavage, nucleotidyl transferase, ATPase and helicase activities. Acts as an inhibitor of C-sense gene transcription. In Avena sativa (Oat), this protein is Replication-associated protein.